The following is a 217-amino-acid chain: Small ribosomal subunit protein uS5 (217 aa).

Residues 49 to 112 enclose the S5 DRBM domain; the sequence is LEEKVLDVKL…AQAKKNIIRV (64 aa).

It belongs to the universal ribosomal protein uS5 family. In terms of assembly, part of the 30S ribosomal subunit. Contacts protein S4.

Its function is as follows. With S4 and S12 plays an important role in translational accuracy. This Methanocaldococcus jannaschii (strain ATCC 43067 / DSM 2661 / JAL-1 / JCM 10045 / NBRC 100440) (Methanococcus jannaschii) protein is Small ribosomal subunit protein uS5.